A 279-amino-acid polypeptide reads, in one-letter code: NAD kinase (279 aa).

Residue Asp63 is the Proton acceptor of the active site. NAD(+)-binding positions include Asp63–Gly64, Arg68, Asn133–Glu134, and Asp163.

The protein belongs to the NAD kinase family. The cofactor is a divalent metal cation.

The protein localises to the cytoplasm. The enzyme catalyses NAD(+) + ATP = ADP + NADP(+) + H(+). Functionally, involved in the regulation of the intracellular balance of NAD and NADP, and is a key enzyme in the biosynthesis of NADP. Catalyzes specifically the phosphorylation on 2'-hydroxyl of the adenosine moiety of NAD to yield NADP. The sequence is that of NAD kinase from Protochlamydia amoebophila (strain UWE25).